The sequence spans 641 residues: Calpain-6 (641 aa).

Residues 26-343 enclose the Calpain catalytic domain; it reads LFCDPTFLPE…FHKLNVCRNV (318 aa). The segment at 344-495 is domain III; that stretch reads NNPVFGRKEL…IFSEVPVQLR (152 aa). Residues 498–621 form the C2 domain; that stretch reads TLDMPKMSCW…YLRKKGGPTA (124 aa).

Belongs to the peptidase C2 family. As to quaternary structure, interacts (via domain III) with microtubules. Interacts (via domain II) with ARHGEF2 (via the N-terminal zinc finger).

The protein resides in the cytoplasm. It is found in the perinuclear region. It localises to the cytoskeleton. Its subcellular location is the spindle. Its function is as follows. Microtubule-stabilizing protein that may be involved in the regulation of microtubule dynamics and cytoskeletal organization. May act as a regulator of RAC1 activity through interaction with ARHGEF2 to control lamellipodial formation and cell mobility. Does not seem to have protease activity as it has lost the active site residues. This chain is Calpain-6 (Capn6), found in Rattus norvegicus (Rat).